Consider the following 461-residue polypeptide: tRNA modification GTPase MnmE (461 aa).

3 residues coordinate (6S)-5-formyl-5,6,7,8-tetrahydrofolate: arginine 23, glutamate 88, and arginine 127. A TrmE-type G domain is found at glycine 223–phenylalanine 383. A K(+)-binding site is contributed by asparagine 233. GTP contacts are provided by residues asparagine 233 to serine 238, threonine 252 to threonine 258, and aspartate 277 to glycine 280. Serine 237 serves as a coordination point for Mg(2+). K(+) is bound by residues threonine 252, isoleucine 254, and threonine 257. Threonine 258 provides a ligand contact to Mg(2+). Lysine 461 lines the (6S)-5-formyl-5,6,7,8-tetrahydrofolate pocket.

Belongs to the TRAFAC class TrmE-Era-EngA-EngB-Septin-like GTPase superfamily. TrmE GTPase family. Homodimer. Heterotetramer of two MnmE and two MnmG subunits. The cofactor is K(+).

It is found in the cytoplasm. Exhibits a very high intrinsic GTPase hydrolysis rate. Involved in the addition of a carboxymethylaminomethyl (cmnm) group at the wobble position (U34) of certain tRNAs, forming tRNA-cmnm(5)s(2)U34. This is tRNA modification GTPase MnmE from Clostridium botulinum (strain Loch Maree / Type A3).